Here is a 271-residue protein sequence, read N- to C-terminus: tRNA pseudouridine synthase A (271 aa).

The active-site Nucleophile is the aspartate 52. A substrate-binding site is contributed by tyrosine 110.

This sequence belongs to the tRNA pseudouridine synthase TruA family. In terms of assembly, homodimer.

It catalyses the reaction uridine(38/39/40) in tRNA = pseudouridine(38/39/40) in tRNA. Functionally, formation of pseudouridine at positions 38, 39 and 40 in the anticodon stem and loop of transfer RNAs. The sequence is that of tRNA pseudouridine synthase A from Burkholderia mallei (strain NCTC 10247).